Consider the following 227-residue polypeptide: Large ribosomal subunit protein uL1 (227 aa).

Belongs to the universal ribosomal protein uL1 family. As to quaternary structure, part of the 50S ribosomal subunit.

Its function is as follows. Binds directly to 23S rRNA. The L1 stalk is quite mobile in the ribosome, and is involved in E site tRNA release. In terms of biological role, protein L1 is also a translational repressor protein, it controls the translation of the L11 operon by binding to its mRNA. The chain is Large ribosomal subunit protein uL1 from Mesoplasma florum (strain ATCC 33453 / NBRC 100688 / NCTC 11704 / L1) (Acholeplasma florum).